The primary structure comprises 497 residues: Membrane-bound lytic murein transglycosylase F (497 aa).

The first 29 residues, 1–29 (MFFRPDFRPRCAKWLIATGLFLMLGACVE), serve as a signal peptide directing secretion. Residues 30–267 (KPTTLERVKE…RLKDRYYGHV (238 aa)) form a non-LT domain region. The LT domain stretch occupies residues 268–497 (DVLGYVGAYT…PASSPEKPAL (230 aa)). Residue glutamate 314 is part of the active site. Positions 464–497 (VADGNLHVPGVDKTQPPAPTAPVVPASSPEKPAL) are disordered. Over residues 486 to 497 (VVPASSPEKPAL) the composition is skewed to low complexity.

In the N-terminal section; belongs to the bacterial solute-binding protein 3 family. It in the C-terminal section; belongs to the transglycosylase Slt family.

The protein resides in the cell outer membrane. The enzyme catalyses Exolytic cleavage of the (1-&gt;4)-beta-glycosidic linkage between N-acetylmuramic acid (MurNAc) and N-acetylglucosamine (GlcNAc) residues in peptidoglycan, from either the reducing or the non-reducing ends of the peptidoglycan chains, with concomitant formation of a 1,6-anhydrobond in the MurNAc residue.. Murein-degrading enzyme that degrades murein glycan strands and insoluble, high-molecular weight murein sacculi, with the concomitant formation of a 1,6-anhydromuramoyl product. Lytic transglycosylases (LTs) play an integral role in the metabolism of the peptidoglycan (PG) sacculus. Their lytic action creates space within the PG sacculus to allow for its expansion as well as for the insertion of various structures such as secretion systems and flagella. The chain is Membrane-bound lytic murein transglycosylase F from Pseudomonas syringae pv. tomato (strain ATCC BAA-871 / DC3000).